A 397-amino-acid polypeptide reads, in one-letter code: Elongation factor Tu (397 aa).

The tr-type G domain occupies 10–206 (KPHVNIGTIG…AVDSYIPTPE (197 aa)). The G1 stretch occupies residues 19 to 26 (GHVDHGKT). Position 19 to 26 (19 to 26 (GHVDHGKT)) interacts with GTP. Residue Thr26 participates in Mg(2+) binding. Positions 60–64 (GITIN) are G2. Residues 81 to 84 (DCPG) form a G3 region. GTP contacts are provided by residues 81 to 85 (DCPGH) and 136 to 139 (NKAD). The segment at 136–139 (NKAD) is G4. The tract at residues 174–176 (SAL) is G5.

Belongs to the TRAFAC class translation factor GTPase superfamily. Classic translation factor GTPase family. EF-Tu/EF-1A subfamily. In terms of assembly, monomer.

Its subcellular location is the cytoplasm. It carries out the reaction GTP + H2O = GDP + phosphate + H(+). Its function is as follows. GTP hydrolase that promotes the GTP-dependent binding of aminoacyl-tRNA to the A-site of ribosomes during protein biosynthesis. This Clostridium perfringens (strain ATCC 13124 / DSM 756 / JCM 1290 / NCIMB 6125 / NCTC 8237 / Type A) protein is Elongation factor Tu.